A 385-amino-acid chain; its full sequence is Probable protein phosphatase 2C 38 (385 aa).

The region spanning 46-357 is the PPM-type phosphatase domain; it reads VAGEFSMSVI…DDITVIVVFL (312 aa). Ser77 carries the post-translational modification Phosphoserine. 4 residues coordinate Mn(2+): Asp88, Gly89, Asp289, and Asp348.

Belongs to the PP2C family. Interacts with BIK1. Mg(2+) serves as cofactor. Mn(2+) is required as a cofactor. Post-translationally, phosphorylation at Ser-77 induces dissociation of PP2C38 from BIK1.

Its subcellular location is the cell membrane. It catalyses the reaction O-phospho-L-seryl-[protein] + H2O = L-seryl-[protein] + phosphate. The enzyme catalyses O-phospho-L-threonyl-[protein] + H2O = L-threonyl-[protein] + phosphate. Functionally, may dephosphorylate and repress plasma membrane H(+)-ATPases (PM H(+)-ATPases, e.g. AHA1 and AHA2), thus influencing negatively plant growth and fitness. Involved in pathogen-associated molecular pattern (PAMP)-triggered immunity (PTI) signaling. Negatively regulates immune responses by controlling the phosphorylation and activation status of BIK1, a central rate-limiting kinase in PTI signaling. Impairs the phosphorylation of the NADPH oxidase RBOHD by BIK1. The sequence is that of Probable protein phosphatase 2C 38 from Arabidopsis thaliana (Mouse-ear cress).